The following is a 208-amino-acid chain: ATP-dependent Clp protease proteolytic subunit (208 aa).

Ser-107 serves as the catalytic Nucleophile. His-132 is an active-site residue.

Belongs to the peptidase S14 family. Fourteen ClpP subunits assemble into 2 heptameric rings which stack back to back to give a disk-like structure with a central cavity, resembling the structure of eukaryotic proteasomes.

The protein resides in the cytoplasm. It carries out the reaction Hydrolysis of proteins to small peptides in the presence of ATP and magnesium. alpha-casein is the usual test substrate. In the absence of ATP, only oligopeptides shorter than five residues are hydrolyzed (such as succinyl-Leu-Tyr-|-NHMec, and Leu-Tyr-Leu-|-Tyr-Trp, in which cleavage of the -Tyr-|-Leu- and -Tyr-|-Trp bonds also occurs).. Functionally, cleaves peptides in various proteins in a process that requires ATP hydrolysis. Has a chymotrypsin-like activity. Plays a major role in the degradation of misfolded proteins. The polypeptide is ATP-dependent Clp protease proteolytic subunit (Jannaschia sp. (strain CCS1)).